A 102-amino-acid chain; its full sequence is Urease subunit beta (102 aa).

This sequence belongs to the urease beta subunit family. Heterotrimer of UreA (gamma), UreB (beta) and UreC (alpha) subunits. Three heterotrimers associate to form the active enzyme.

The protein resides in the cytoplasm. It catalyses the reaction urea + 2 H2O + H(+) = hydrogencarbonate + 2 NH4(+). It participates in nitrogen metabolism; urea degradation; CO(2) and NH(3) from urea (urease route): step 1/1. This Pseudomonas savastanoi pv. phaseolicola (strain 1448A / Race 6) (Pseudomonas syringae pv. phaseolicola (strain 1448A / Race 6)) protein is Urease subunit beta.